A 743-amino-acid chain; its full sequence is Phenylalanine ammonia-lyase 1 (743 aa).

Y120 functions as the Proton donor/acceptor in the catalytic mechanism. Residues 224–226 constitute a cross-link (5-imidazolinone (Ala-Gly)); sequence ASG. Position 225 is a 2,3-didehydroalanine (Ser) (S225). 7 residues coordinate (E)-cinnamate: N287, Q377, R383, N413, K484, E512, and N515.

Belongs to the PAL/histidase family. In terms of assembly, homotetramer. In terms of processing, contains an active site 4-methylidene-imidazol-5-one (MIO), which is formed autocatalytically by cyclization and dehydration of residues Ala-Ser-Gly.

Its subcellular location is the cytoplasm. The catalysed reaction is L-phenylalanine = (E)-cinnamate + NH4(+). Its pathway is phenylpropanoid metabolism; trans-cinnamate biosynthesis; trans-cinnamate from L-phenylalanine: step 1/1. Its function is as follows. Catalyzes the non-oxidative deamination of L-phenylalanine to form trans-cinnamic acid and a free ammonium ion. Facilitates the commitment step in phenylpropanoid pathways that produce secondary metabolites such as lignins, coumarins and flavonoids. This is Phenylalanine ammonia-lyase 1 from Pleurotus ostreatus (Oyster mushroom).